A 381-amino-acid polypeptide reads, in one-letter code: Alkanesulfonate monooxygenase (381 aa).

This sequence belongs to the SsuD family. Homotetramer.

It carries out the reaction an alkanesulfonate + FMNH2 + O2 = an aldehyde + FMN + sulfite + H2O + 2 H(+). Functionally, catalyzes the desulfonation of aliphatic sulfonates. This chain is Alkanesulfonate monooxygenase, found in Cronobacter sakazakii (strain ATCC BAA-894) (Enterobacter sakazakii).